Consider the following 302-residue polypeptide: Plant UBX domain-containing protein 3 (302 aa).

Disordered stretches follow at residues 1-64 and 79-98; these read MSSK…PKHD and VEGP…TGRL. Positions 113-177 constitute an SEP domain; that stretch reads PVIHNIIFWS…NLMRRDEKCP (65 aa). A UBX domain is found at 224 to 301; it reads ETLPSTSIQL…GLASSVVIQK (78 aa).

As to quaternary structure, interacts with CDC48A.

This is Plant UBX domain-containing protein 3 from Arabidopsis thaliana (Mouse-ear cress).